We begin with the raw amino-acid sequence, 20 residues long: Superoxide dismutase [Mn], mitochondrial (20 aa).

It belongs to the iron/manganese superoxide dismutase family. In terms of assembly, homotetramer. Requires Mn(2+) as cofactor.

Its subcellular location is the mitochondrion matrix. It catalyses the reaction 2 superoxide + 2 H(+) = H2O2 + O2. In terms of biological role, destroys superoxide anion radicals which are normally produced within the cells and which are toxic to biological systems. The sequence is that of Superoxide dismutase [Mn], mitochondrial (SODA) from Hordeum vulgare (Barley).